Consider the following 195-residue polypeptide: Ribosome maturation factor RimM (195 aa).

Residues 101-191 (ADEWYPKDLI…YLTLDPPGGL (91 aa)) enclose the PRC barrel domain.

This sequence belongs to the RimM family. As to quaternary structure, binds ribosomal protein uS19.

The protein resides in the cytoplasm. In terms of biological role, an accessory protein needed during the final step in the assembly of 30S ribosomal subunit, possibly for assembly of the head region. Essential for efficient processing of 16S rRNA. May be needed both before and after RbfA during the maturation of 16S rRNA. It has affinity for free ribosomal 30S subunits but not for 70S ribosomes. The polypeptide is Ribosome maturation factor RimM (Bifidobacterium adolescentis (strain ATCC 15703 / DSM 20083 / NCTC 11814 / E194a)).